The following is a 73-amino-acid chain: Putative antitoxin VapB18 (73 aa).

Belongs to the UPF0330 family.

Possibly the antitoxin component of a type II toxin-antitoxin (TA) system. Its cognate toxin is VapC18 (Potential). In Archaeoglobus fulgidus (strain ATCC 49558 / DSM 4304 / JCM 9628 / NBRC 100126 / VC-16), this protein is Putative antitoxin VapB18 (vapB18).